The sequence spans 59 residues: Large ribosomal subunit protein bL33 (59 aa).

It belongs to the bacterial ribosomal protein bL33 family.

This chain is Large ribosomal subunit protein bL33, found in Borrelia turicatae (strain 91E135).